The primary structure comprises 162 residues: Lipoprotein signal peptidase (162 aa).

4 helical membrane passes run 9-29, 39-59, 66-86, and 95-115; these read LCLV…LVAT, VIHG…FGLF, VRKF…LWLY, and VLSF…IDRF. Active-site residues include Asp-122 and Asp-140. A helical transmembrane segment spans residues 136–156; the sequence is FNVADSAITIGMVVFVYHVIF.

Belongs to the peptidase A8 family.

It localises to the cell inner membrane. It catalyses the reaction Release of signal peptides from bacterial membrane prolipoproteins. Hydrolyzes -Xaa-Yaa-Zaa-|-(S,diacylglyceryl)Cys-, in which Xaa is hydrophobic (preferably Leu), and Yaa (Ala or Ser) and Zaa (Gly or Ala) have small, neutral side chains.. It participates in protein modification; lipoprotein biosynthesis (signal peptide cleavage). In terms of biological role, this protein specifically catalyzes the removal of signal peptides from prolipoproteins. The sequence is that of Lipoprotein signal peptidase from Desulforapulum autotrophicum (strain ATCC 43914 / DSM 3382 / VKM B-1955 / HRM2) (Desulfobacterium autotrophicum).